Consider the following 141-residue polypeptide: Ribosome-binding factor A (141 aa).

Residues 120-141 (SPHVQRDLQENDDQEDDSEGSL) are disordered. Acidic residues predominate over residues 129 to 141 (ENDDQEDDSEGSL).

It belongs to the RbfA family. In terms of assembly, monomer. Binds 30S ribosomal subunits, but not 50S ribosomal subunits or 70S ribosomes.

Its subcellular location is the cytoplasm. One of several proteins that assist in the late maturation steps of the functional core of the 30S ribosomal subunit. Associates with free 30S ribosomal subunits (but not with 30S subunits that are part of 70S ribosomes or polysomes). Required for efficient processing of 16S rRNA. May interact with the 5'-terminal helix region of 16S rRNA. The sequence is that of Ribosome-binding factor A from Zymomonas mobilis subsp. mobilis (strain ATCC 31821 / ZM4 / CP4).